The primary structure comprises 290 residues: Small ribosomal subunit protein uS2 (290 aa).

It belongs to the universal ribosomal protein uS2 family. As to quaternary structure, component of the small ribosomal subunit. Mature ribosomes consist of a small (40S) and a large (60S) subunit. The 40S subunit contains about 33 different proteins and 1 molecule of RNA (18S). The 60S subunit contains about 49 different proteins and 3 molecules of RNA (28S, 5.8S and 5S). Interacts with ribosomal protein S21.

It is found in the cytoplasm. Required for the assembly and/or stability of the 40S ribosomal subunit. Required for the processing of the 20S rRNA-precursor to mature 18S rRNA in a late step of the maturation of 40S ribosomal subunits. The protein is Small ribosomal subunit protein uS2 of Culex quinquefasciatus (Southern house mosquito).